The primary structure comprises 64 residues: Beta sliding clamp (64 aa).

This sequence belongs to the beta sliding clamp family. In terms of assembly, forms a ring-shaped head-to-tail homodimer around DNA which binds and tethers DNA polymerases and other proteins to the DNA. The DNA replisome complex has a single clamp-loading complex (3 tau and 1 each of delta, delta', psi and chi subunits) which binds 3 Pol III cores (1 core on the leading strand and 2 on the lagging strand) each with a beta sliding clamp dimer. Additional proteins in the replisome are other copies of gamma, psi and chi, Ssb, DNA helicase and RNA primase.

It localises to the cytoplasm. Functionally, confers DNA tethering and processivity to DNA polymerases and other proteins. Acts as a clamp, forming a ring around DNA (a reaction catalyzed by the clamp-loading complex) which diffuses in an ATP-independent manner freely and bidirectionally along dsDNA. Initially characterized for its ability to contact the catalytic subunit of DNA polymerase III (Pol III), a complex, multichain enzyme responsible for most of the replicative synthesis in bacteria; Pol III exhibits 3'-5' exonuclease proofreading activity. The beta chain is required for initiation of replication as well as for processivity of DNA replication. The protein is Beta sliding clamp (dnaN) of Actinobacillus pleuropneumoniae (Haemophilus pleuropneumoniae).